The sequence spans 231 residues: 5'-methylthioadenosine/S-adenosylhomocysteine nucleosidase (231 aa).

The active-site Proton acceptor is glutamate 12. Substrate-binding positions include glycine 78, valine 153, and 174–175 (ME). Aspartate 198 serves as the catalytic Proton donor.

Belongs to the PNP/UDP phosphorylase family. MtnN subfamily.

It carries out the reaction S-adenosyl-L-homocysteine + H2O = S-(5-deoxy-D-ribos-5-yl)-L-homocysteine + adenine. The catalysed reaction is S-methyl-5'-thioadenosine + H2O = 5-(methylsulfanyl)-D-ribose + adenine. The enzyme catalyses 5'-deoxyadenosine + H2O = 5-deoxy-D-ribose + adenine. It participates in amino-acid biosynthesis; L-methionine biosynthesis via salvage pathway; S-methyl-5-thio-alpha-D-ribose 1-phosphate from S-methyl-5'-thioadenosine (hydrolase route): step 1/2. In terms of biological role, catalyzes the irreversible cleavage of the glycosidic bond in both 5'-methylthioadenosine (MTA) and S-adenosylhomocysteine (SAH/AdoHcy) to adenine and the corresponding thioribose, 5'-methylthioribose and S-ribosylhomocysteine, respectively. Also cleaves 5'-deoxyadenosine, a toxic by-product of radical S-adenosylmethionine (SAM) enzymes, into 5-deoxyribose and adenine. The chain is 5'-methylthioadenosine/S-adenosylhomocysteine nucleosidase from Aliivibrio salmonicida (strain LFI1238) (Vibrio salmonicida (strain LFI1238)).